The sequence spans 632 residues: MAU2 chromatid cohesion factor homolog (632 aa).

TPR repeat units follow at residues 453–486 (GGFYYVQGLHAFHKNSFHEAKRFLRETLKMANAE) and 493–526 (SCSLVLLSHVFLSIGNSKESMNMVTPAMQLASKI).

This sequence belongs to the SCC4/mau-2 family. In terms of assembly, interacts with Nipped-B to form the cohesin loading complex.

It is found in the nucleus. It localises to the nucleoplasm. In terms of biological role, required for association of the cohesin complex with chromatin during interphase. Plays a role in sister chromatid cohesion and normal progression through prometaphase. This Drosophila melanogaster (Fruit fly) protein is MAU2 chromatid cohesion factor homolog.